A 320-amino-acid chain; its full sequence is Cytochrome f (320 aa).

The signal sequence occupies residues 1–35 (MRNINTYDWMKKWMTRSISILVMIHMITRTSISNA). 4 residues coordinate heme: Tyr36, Cys56, Cys59, and His60. A helical membrane pass occupies residues 286-306 (VQGLLLLLASVILAQIFLVLK).

The protein belongs to the cytochrome f family. In terms of assembly, the 4 large subunits of the cytochrome b6-f complex are cytochrome b6, subunit IV (17 kDa polypeptide, petD), cytochrome f and the Rieske protein, while the 4 small subunits are PetG, PetL, PetM and PetN. The complex functions as a dimer. Heme serves as cofactor.

It localises to the plastid. The protein localises to the chloroplast thylakoid membrane. Functionally, component of the cytochrome b6-f complex, which mediates electron transfer between photosystem II (PSII) and photosystem I (PSI), cyclic electron flow around PSI, and state transitions. The sequence is that of Cytochrome f from Cycas taitungensis (Prince sago).